The following is a 128-amino-acid chain: Putative pre-16S rRNA nuclease (128 aa).

Belongs to the YqgF nuclease family.

Its subcellular location is the cytoplasm. Its function is as follows. Could be a nuclease involved in processing of the 5'-end of pre-16S rRNA. In Sulfurovum sp. (strain NBC37-1), this protein is Putative pre-16S rRNA nuclease.